The chain runs to 833 residues: Leucine--tRNA ligase (833 aa).

The short motif at P41–H52 is the 'HIGH' region element. The 'KMSKS' region motif lies at K610–S614. Position 613 (K613) interacts with ATP.

The protein belongs to the class-I aminoacyl-tRNA synthetase family.

It is found in the cytoplasm. The enzyme catalyses tRNA(Leu) + L-leucine + ATP = L-leucyl-tRNA(Leu) + AMP + diphosphate. This chain is Leucine--tRNA ligase, found in Streptococcus pyogenes serotype M49 (strain NZ131).